Reading from the N-terminus, the 386-residue chain is Enoyl-[acyl-carrier-protein] reductase 1, mitochondrial (386 aa).

A mitochondrion-targeting transit peptide spans 1-22; it reads MYSVLKQSIRPRLLATHNQFRT. The active-site Proton donor is the Y79. NADP(+)-binding positions include N172, 199 to 202, 222 to 224, 296 to 299, 321 to 323, and K381; these read TSAV, RDR, YGGM, and FWV.

The protein belongs to the zinc-containing alcohol dehydrogenase family. Quinone oxidoreductase subfamily. Homodimer and heterodimer with ETR2.

It is found in the mitochondrion. It carries out the reaction a 2,3-saturated acyl-[ACP] + NADP(+) = a (2E)-enoyl-[ACP] + NADPH + H(+). The catalysed reaction is (2E,4E)-hexadienoyl-CoA + NADPH + H(+) = (4E)-hexenoyl-CoA + NADP(+). It catalyses the reaction (2E)-hexenoyl-CoA + NADPH + H(+) = hexanoyl-CoA + NADP(+). In terms of biological role, catalyzes the NADPH-dependent reduction of trans-2-enoyl thioesters in mitochondrial fatty acid synthesis (fatty acid synthesis type II). Fatty acid chain elongation in mitochondria uses acyl carrier protein (ACP) as an acyl group carrier, but the enzyme accepts both ACP and CoA thioesters as substrates in vitro. Required for respiration and the maintenance of the mitochondrial compartment. This is Enoyl-[acyl-carrier-protein] reductase 1, mitochondrial (ETR1) from Candida tropicalis (Yeast).